Here is a 201-residue protein sequence, read N- to C-terminus: Peptidyl-tRNA hydrolase (201 aa).

TRNA is bound at residue Tyr-14. His-19 functions as the Proton acceptor in the catalytic mechanism. Residues Tyr-64, Asn-66, and Asn-112 each contribute to the tRNA site.

The protein belongs to the PTH family. Monomer.

Its subcellular location is the cytoplasm. It catalyses the reaction an N-acyl-L-alpha-aminoacyl-tRNA + H2O = an N-acyl-L-amino acid + a tRNA + H(+). Functionally, hydrolyzes ribosome-free peptidyl-tRNAs (with 1 or more amino acids incorporated), which drop off the ribosome during protein synthesis, or as a result of ribosome stalling. Catalyzes the release of premature peptidyl moieties from peptidyl-tRNA molecules trapped in stalled 50S ribosomal subunits, and thus maintains levels of free tRNAs and 50S ribosomes. The sequence is that of Peptidyl-tRNA hydrolase from Bradyrhizobium sp. (strain ORS 278).